We begin with the raw amino-acid sequence, 454 residues long: Probable tRNA methyltransferase 9B (454 aa).

Ser-214 carries the phosphoserine modification.

The protein belongs to the methyltransferase superfamily. In terms of tissue distribution, down-regulated in breast, bladder, colorectal, cervix and testicular carcinomas.

In terms of biological role, may modify wobble uridines in specific arginine and glutamic acid tRNAs. Acts as a tumor suppressor by promoting the expression of LIN9. This Homo sapiens (Human) protein is Probable tRNA methyltransferase 9B.